The chain runs to 230 residues: 2-amino-5-formylamino-6-ribosylaminopyrimidin-4(3H)-one 5'-monophosphate deformylase (230 aa).

Residues glutamate 29, histidine 31, aspartate 40, and histidine 109 each coordinate Fe cation.

It belongs to the creatininase superfamily. FAPy deformylase family. Homodimer. Requires Fe(2+) as cofactor. It depends on Zn(2+) as a cofactor.

It carries out the reaction 2-amino-5-formylamino-6-(5-phospho-D-ribosylamino)pyrimidin-4(3H)-one + H2O = 2,5-diamino-6-(1-D-ribosylamino)pyrimidin-4(3H)-one 5'-phosphate + formate + H(+). It participates in cofactor biosynthesis; coenzyme F420 biosynthesis. The protein operates within cofactor biosynthesis; riboflavin biosynthesis. In terms of biological role, catalyzes the hydrolysis of the formamide of 2-amino-5-formylamino-6-ribosylamino-4(3H)-pyrimidinone 5'-monophosphate (FAPy) to form 2,5-diamino-6-ribosylamino-4(3H)-pyrimidinone 5'-phosphate (APy). The chain is 2-amino-5-formylamino-6-ribosylaminopyrimidin-4(3H)-one 5'-monophosphate deformylase from Methanobrevibacter smithii (strain ATCC 35061 / DSM 861 / OCM 144 / PS).